A 341-amino-acid chain; its full sequence is N-acetyl-gamma-glutamyl-phosphate reductase (341 aa).

The active site involves C147.

It belongs to the NAGSA dehydrogenase family. Type 1 subfamily.

It is found in the cytoplasm. The enzyme catalyses N-acetyl-L-glutamate 5-semialdehyde + phosphate + NADP(+) = N-acetyl-L-glutamyl 5-phosphate + NADPH + H(+). It participates in amino-acid biosynthesis; L-arginine biosynthesis; N(2)-acetyl-L-ornithine from L-glutamate: step 3/4. Its function is as follows. Catalyzes the NADPH-dependent reduction of N-acetyl-5-glutamyl phosphate to yield N-acetyl-L-glutamate 5-semialdehyde. The sequence is that of N-acetyl-gamma-glutamyl-phosphate reductase from Dehalococcoides mccartyi (strain ATCC BAA-2100 / JCM 16839 / KCTC 5957 / BAV1).